A 198-amino-acid polypeptide reads, in one-letter code: Probable minor pilin MMP0709 (198 aa).

Residues 1 to 5 (MSNRG) constitute a propeptide that is removed on maturation. The QXSXEXXXL motif lies at 6 to 14 (QLSIEMVIL).

The N-terminus is probably cleaved by the prepilin peptidase EppA, which recognizes the class III signal sequence.

It localises to the secreted. The protein resides in the cell surface. The protein localises to the fimbrium. This Methanococcus maripaludis (strain DSM 14266 / JCM 13030 / NBRC 101832 / S2 / LL) protein is Probable minor pilin MMP0709.